Consider the following 518-residue polypeptide: Protein translocase subunit SecD (518 aa).

A run of 6 helical transmembrane segments spans residues 9–29 (IFLS…NFMQ), 361–381 (LIGF…LGLF), 384–404 (IALS…QATL), 406–426 (LPGI…NVLI), 452–474 (FATI…IFGV), and 486–506 (IGII…IDIW).

The protein belongs to the SecD/SecF family. SecD subfamily. In terms of assembly, forms a complex with SecF. Part of the essential Sec protein translocation apparatus which comprises SecA, SecYEG and auxiliary proteins SecDF-YajC and YidC.

It localises to the cell inner membrane. In terms of biological role, part of the Sec protein translocase complex. Interacts with the SecYEG preprotein conducting channel. SecDF uses the proton motive force (PMF) to complete protein translocation after the ATP-dependent function of SecA. The protein is Protein translocase subunit SecD of Rickettsia felis (strain ATCC VR-1525 / URRWXCal2) (Rickettsia azadi).